The sequence spans 186 residues: FMN-dependent NADH:quinone oxidoreductase 1 (186 aa).

FMN contacts are provided by residues 15 to 17 and 81 to 84; these read SVS and MYNF.

It belongs to the azoreductase type 1 family. Homodimer. FMN is required as a cofactor.

It catalyses the reaction 2 a quinone + NADH + H(+) = 2 a 1,4-benzosemiquinone + NAD(+). It carries out the reaction N,N-dimethyl-1,4-phenylenediamine + anthranilate + 2 NAD(+) = 2-(4-dimethylaminophenyl)diazenylbenzoate + 2 NADH + 2 H(+). In terms of biological role, quinone reductase that provides resistance to thiol-specific stress caused by electrophilic quinones. Its function is as follows. Also exhibits azoreductase activity. Catalyzes the reductive cleavage of the azo bond in aromatic azo compounds to the corresponding amines. The protein is FMN-dependent NADH:quinone oxidoreductase 1 of Idiomarina loihiensis (strain ATCC BAA-735 / DSM 15497 / L2-TR).